A 168-amino-acid chain; its full sequence is Oocyte-secreted protein 2 (168 aa).

An N-terminal signal peptide occupies residues 1–21 (MGVSMALEVLVYLAVLVWTCA).

This sequence belongs to the PLAC1 family. As to expression, expressed in ovaries. Highly expressed in the germinal vesicles oocytes and metaphase II oocytes.

The protein localises to the secreted. The protein resides in the cytoplasm. In Mus musculus (Mouse), this protein is Oocyte-secreted protein 2 (Oosp2).